The following is a 422-amino-acid chain: Tyrosine--tRNA ligase 1 (422 aa).

Position 36 (Y36) interacts with L-tyrosine. Residues 41 to 50 (PTAGSLHIGH) carry the 'HIGH' region motif. Residues Y173 and Q177 each contribute to the L-tyrosine site. Residues 233–237 (KFGKT) carry the 'KMSKS' region motif. K236 contributes to the ATP binding site. Residues 355–419 (SDVVTLLLET…GKKQFAMVKL (65 aa)) form the S4 RNA-binding domain.

The protein belongs to the class-I aminoacyl-tRNA synthetase family. TyrS type 1 subfamily. Homodimer.

It localises to the cytoplasm. It carries out the reaction tRNA(Tyr) + L-tyrosine + ATP = L-tyrosyl-tRNA(Tyr) + AMP + diphosphate + H(+). Functionally, catalyzes the attachment of tyrosine to tRNA(Tyr) in a two-step reaction: tyrosine is first activated by ATP to form Tyr-AMP and then transferred to the acceptor end of tRNA(Tyr). In Vibrio vulnificus (strain YJ016), this protein is Tyrosine--tRNA ligase 1.